We begin with the raw amino-acid sequence, 264 residues long: Major prion protein (264 aa).

An N-terminal signal peptide occupies residues 1–24 (MVKSHIGSWILVLFVAMWSDVGLC). The tract at residues 25 to 241 (KKRPKPGGGW…ESQAYYQRGA (217 aa)) is interaction with GRB2, ERI3 and SYN1. A disordered region spans residues 28–118 (PKPGGGWNTG…QWNKPSKPKT (91 aa)). Residues 37–54 (GGSRYPGPGSPGGNRYPP) show a composition bias toward low complexity. Repeat copies occupy residues 54-62 (PQGGGGWGQ), 63-70 (PHGGGWGQ), 71-78 (PHGGGWGQ), 79-86 (PHGGGWGQ), 87-94 (PHGGGWGQ), and 95-103 (PHGGGGWGQ). The 6 X 8 AA tandem repeats of P-H-G-G-G-W-G-Q stretch occupies residues 54–103 (PQGGGGWGQPHGGGWGQPHGGGWGQPHGGGWGQPHGGGWGQPHGGGGWGQ). Residues 55 to 107 (QGGGGWGQPHGGGWGQPHGGGWGQPHGGGWGQPHGGGWGQPHGGGGWGQGGTH) are compositionally biased toward gly residues. The Cu(2+) site is built by H72, G73, G74, H80, G81, G82, H88, G89, G90, H96, and G98. C190 and C225 form a disulfide bridge. N192 and N208 each carry an N-linked (GlcNAc...) asparagine glycan. A241 is lipidated: GPI-anchor amidated alanine. A propeptide spans 242 to 264 (SVILFSSPPVILLISFLIFLIVG) (removed in mature form).

The protein belongs to the prion family. Monomer and homodimer. Has a tendency to aggregate into amyloid fibrils containing a cross-beta spine, formed by a steric zipper of superposed beta-strands. Soluble oligomers may represent an intermediate stage on the path to fibril formation. Copper binding may promote oligomerization. Interacts with GRB2, APP, ERI3/PRNPIP and SYN1. Mislocalized cytosolically exposed PrP interacts with MGRN1; this interaction alters MGRN1 subcellular location and causes lysosomal enlargement. Interacts with KIAA1191.

The protein resides in the cell membrane. It localises to the golgi apparatus. Functionally, its primary physiological function is unclear. Has cytoprotective activity against internal or environmental stresses. May play a role in neuronal development and synaptic plasticity. May be required for neuronal myelin sheath maintenance. May play a role in iron uptake and iron homeostasis. Soluble oligomers are toxic to cultured neuroblastoma cells and induce apoptosis (in vitro). Association with GPC1 (via its heparan sulfate chains) targets PRNP to lipid rafts. Also provides Cu(2+) or Zn(2+) for the ascorbate-mediated GPC1 deaminase degradation of its heparan sulfate side chains. The polypeptide is Major prion protein (PRNP) (Ailuropoda melanoleuca (Giant panda)).